The following is a 701-amino-acid chain: Elongation factor G (701 aa).

Residues 8-291 (SRYRNIGIVA…AVIDYLPAPI (284 aa)) form the tr-type G domain. Residues 17-24 (AHVDAGKT), 89-93 (DTPGH), and 143-146 (NKMD) contribute to the GTP site.

This sequence belongs to the TRAFAC class translation factor GTPase superfamily. Classic translation factor GTPase family. EF-G/EF-2 subfamily.

Its subcellular location is the cytoplasm. Functionally, catalyzes the GTP-dependent ribosomal translocation step during translation elongation. During this step, the ribosome changes from the pre-translocational (PRE) to the post-translocational (POST) state as the newly formed A-site-bound peptidyl-tRNA and P-site-bound deacylated tRNA move to the P and E sites, respectively. Catalyzes the coordinated movement of the two tRNA molecules, the mRNA and conformational changes in the ribosome. The polypeptide is Elongation factor G (Pseudomonas syringae pv. tomato (strain ATCC BAA-871 / DC3000)).